We begin with the raw amino-acid sequence, 251 residues long: Hydroxyacylglutathione hydrolase (251 aa).

Positions 53, 55, 57, 58, 110, 127, and 165 each coordinate Zn(2+).

This sequence belongs to the metallo-beta-lactamase superfamily. Glyoxalase II family. In terms of assembly, monomer. Requires Zn(2+) as cofactor.

The catalysed reaction is an S-(2-hydroxyacyl)glutathione + H2O = a 2-hydroxy carboxylate + glutathione + H(+). Its pathway is secondary metabolite metabolism; methylglyoxal degradation; (R)-lactate from methylglyoxal: step 2/2. Functionally, thiolesterase that catalyzes the hydrolysis of S-D-lactoyl-glutathione to form glutathione and D-lactic acid. The sequence is that of Hydroxyacylglutathione hydrolase from Salmonella paratyphi A (strain ATCC 9150 / SARB42).